A 223-amino-acid chain; its full sequence is Transmembrane protein 126 (223 aa).

The Mitochondrial matrix segment spans residues 1 to 39; the sequence is MALSRAKPDELPRDAVVITEDQALKYQWKIITSWDKIGE. The chain crosses the membrane as a helical span at residues 40 to 62; sequence VWSLRYTPGILSALAAGTGAYIN. The Mitochondrial intermembrane portion of the chain corresponds to 63–78; that stretch reads NHYRTKLRLGGHGRLS. The chain crosses the membrane as a helical span at residues 79–99; that stretch reads TYLPIVAVPAIFTMLAHKFFI. The Mitochondrial matrix segment spans residues 100-123; the sequence is QRPILLNPLGECPVCIQMRSAAFQ. Residues 124–144 traverse the membrane as a helical segment; sequence TSLGIVYPTILAPFAAFLFAT. Residues 145-171 lie on the Mitochondrial intermembrane side of the membrane; that stretch reads RCYTYRIPSITENPREVFLLWRKFTRP. The helical transmembrane segment at 172–192 threads the bilayer; it reads IVPALGTLIGLQALLTMFLTG. The Mitochondrial matrix portion of the chain corresponds to 193–223; that stretch reads QEDKQNFKLMLRMREIEHQVEEEHLPQRMDF.

This sequence belongs to the TMEM126 family. In terms of assembly, associates with mitochondrial complex I assembly intermediates during its biogenesis.

It is found in the mitochondrion membrane. Functionally, as part of the MCIA complex, involved in the assembly of the mitochondrial complex I. This Drosophila melanogaster (Fruit fly) protein is Transmembrane protein 126.